The primary structure comprises 256 residues: Probable septum site-determining protein MinC (256 aa).

Positions 105-143 (RRGATAKPEPADEAEPPVAAAAAEAVPEPAPELAPSAPT) are disordered. Residues 120 to 142 (PPVAAAAAEAVPEPAPELAPSAP) show a composition bias toward low complexity.

The protein belongs to the MinC family. In terms of assembly, interacts with MinD and FtsZ.

Cell division inhibitor that blocks the formation of polar Z ring septums. Rapidly oscillates between the poles of the cell to destabilize FtsZ filaments that have formed before they mature into polar Z rings. Prevents FtsZ polymerization. The protein is Probable septum site-determining protein MinC of Burkholderia vietnamiensis (strain G4 / LMG 22486) (Burkholderia cepacia (strain R1808)).